The primary structure comprises 315 residues: CID domain-containing protein 1 (315 aa).

Residues 1–135 enclose the CID domain; the sequence is MADFTEQTLR…RLHEVHQQVK (135 aa). The stretch at 227 to 273 forms a coiled coil; sequence MLEEYVKRLKNETNERETLESNLNMLIENVRMSIEHHEKLCREVKRR.

The chain is CID domain-containing protein 1 (cids-1) from Caenorhabditis elegans.